Here is a 350-residue protein sequence, read N- to C-terminus: Putative aminopeptidase MJ0555 (350 aa).

The a divalent metal cation site is built by histidine 62 and aspartate 175. The active-site Proton acceptor is glutamate 207. A divalent metal cation is bound by residues glutamate 208, aspartate 230, and histidine 321.

The protein belongs to the peptidase M42 family. A divalent metal cation is required as a cofactor.

This is Putative aminopeptidase MJ0555 from Methanocaldococcus jannaschii (strain ATCC 43067 / DSM 2661 / JAL-1 / JCM 10045 / NBRC 100440) (Methanococcus jannaschii).